The following is a 377-amino-acid chain: MTVGERITLADLPLRDDLRGKSPYGAPQLQVPVRLNTNENPHPPSQALVDDVTRSVGEAAAELHRYPDRDAVALRSDLADYLNLRTGVELSVENLWAANGSNEVLQQLLQAFGGPGRSAIGFVPSYSMHPIIADATRTEWLQALRADDFGLDVDTAVREIAARRPDLVFVTSPNNPSGQSVPLEDLRRLLDAMETGILILDEAYGEFSSQPSGVALIDQYPTKLVVSRTMSKAFAFAGGRLGYLVAAPAVIEAMLLVRLPYHLSSLTQAAARAALRHADDTLASVATLIAERDRVANGLSQLGFRVVPSDANFILFGEFADAPATWRRYLDQGVLIRDVGIPGYLRTTIGLAEENDALLTASARLVETELAATLGAL.

Lysine 232 carries the N6-(pyridoxal phosphate)lysine modification.

This sequence belongs to the class-II pyridoxal-phosphate-dependent aminotransferase family. Histidinol-phosphate aminotransferase subfamily. In terms of assembly, homodimer. Pyridoxal 5'-phosphate serves as cofactor.

The enzyme catalyses L-histidinol phosphate + 2-oxoglutarate = 3-(imidazol-4-yl)-2-oxopropyl phosphate + L-glutamate. The protein operates within amino-acid biosynthesis; L-histidine biosynthesis; L-histidine from 5-phospho-alpha-D-ribose 1-diphosphate: step 7/9. The sequence is that of Histidinol-phosphate aminotransferase from Mycobacterium sp. (strain KMS).